Consider the following 264-residue polypeptide: Ribonuclease HII (264 aa).

Residues 33–224 (GPVAGVDEVG…VRRVASGSNT (192 aa)) form the RNase H type-2 domain. 3 residues coordinate a divalent metal cation: Asp39, Glu40, and Asp133. Positions 222–264 (SNTAEVADGQPDPRDGTAQTGEGRWSKSSHPATMRATGRAQGT) are disordered.

This sequence belongs to the RNase HII family. Mn(2+) is required as a cofactor. The cofactor is Mg(2+).

The protein localises to the cytoplasm. It catalyses the reaction Endonucleolytic cleavage to 5'-phosphomonoester.. Functionally, endonuclease that specifically degrades the RNA of RNA-DNA hybrids. The protein is Ribonuclease HII of Mycobacterium bovis (strain ATCC BAA-935 / AF2122/97).